The sequence spans 215 residues: L-fuculose phosphate aldolase (215 aa).

Residues 28-29 (GN), 43-44 (TG), and 71-72 (SS) each bind substrate. Glutamate 73 serves as the catalytic Proton donor/acceptor. Zn(2+) contacts are provided by glutamate 73, histidine 92, histidine 94, and histidine 155.

This sequence belongs to the aldolase class II family. AraD/FucA subfamily. In terms of assembly, homotetramer. The cofactor is Zn(2+).

The enzyme catalyses L-fuculose 1-phosphate = (S)-lactaldehyde + dihydroxyacetone phosphate. It functions in the pathway carbohydrate degradation; L-fucose degradation; L-lactaldehyde and glycerone phosphate from L-fucose: step 3/3. Its function is as follows. Involved in the degradation of L-fucose and D-arabinose. Catalyzes the reversible cleavage of L-fuculose 1-phosphate (Fuc1P) to yield dihydroxyacetone phosphate (DHAP) and L-lactaldehyde. The protein is L-fuculose phosphate aldolase of Escherichia coli O157:H7.